The chain runs to 90 residues: Acylphosphatase (90 aa).

The 86-residue stretch at 5 to 90 (SYLFNVKGKV…WQELTDFKMY (86 aa)) folds into the Acylphosphatase-like domain. Residues Arg-20 and Asn-38 contribute to the active site.

It belongs to the acylphosphatase family.

It carries out the reaction an acyl phosphate + H2O = a carboxylate + phosphate + H(+). This Aliivibrio fischeri (strain ATCC 700601 / ES114) (Vibrio fischeri) protein is Acylphosphatase (acyP).